Consider the following 431-residue polypeptide: Histidine--tRNA ligase (431 aa).

The protein belongs to the class-II aminoacyl-tRNA synthetase family. As to quaternary structure, homodimer.

It localises to the cytoplasm. The enzyme catalyses tRNA(His) + L-histidine + ATP = L-histidyl-tRNA(His) + AMP + diphosphate + H(+). The polypeptide is Histidine--tRNA ligase (Neisseria meningitidis serogroup C / serotype 2a (strain ATCC 700532 / DSM 15464 / FAM18)).